The following is a 381-amino-acid chain: Alkanesulfonate monooxygenase (381 aa).

This sequence belongs to the SsuD family. Homotetramer.

It carries out the reaction an alkanesulfonate + FMNH2 + O2 = an aldehyde + FMN + sulfite + H2O + 2 H(+). Its function is as follows. Catalyzes the desulfonation of aliphatic sulfonates. The protein is Alkanesulfonate monooxygenase of Escherichia coli (strain SMS-3-5 / SECEC).